The sequence spans 751 residues: MIHQYFAACPKGLEGLLLQELQALGATDTRETIAGVYFNGDLNLAYRTCLWSRLANKILLPLANFEVNSQEDLYEGVRMLPWQDHLSPSGSLLVDFVGTNDAIRNTQFGALKVKDAIVDCLRDFSGVRPNIAKRDPDLLVNARLSKNKLVLSIDLSGESLHRRGYRLKQGSAPLKENLAAGILIRAGWPEVAAQGGALLDPMCGSGTFLVEAALMAADIAPGLGRASFGFERWLNHRNDLWLTLREEAHHRRKLGLAKVNLPEIRGYDADVRVVRAAEENIISAELDHWLRVSRKELAEFKKPTHRAMDYGLVLSNPPYGERLGEIESLKLLYAHLGERLRNEFPGWRAGVFTGNPELGKQMGLRADKKYKFFNGTIASELLMFSINTDVFVQSRVEQDGRFSKDEVERDAAEQKVKAAAKEEQAAALSNGAQMLVNRLQKNRKQLEKWARKNEVSCYRLYDADMPEYAAAIDLYLGQTPPNRAPQLYAHVQEYAAPKSVDEARAAQRFADIEAAVPYALDIPVSHISYKQRRRNKGSSQYEKLNERPTGDLFSVQEGQAKLHINLWQYLDTGLFLDHRPVRHMIANMARDKRFLNLFCYTATASVHAAMGGARYTVSVDMSNTYLNWARKNFALNGLSEARNRLEQADCLKWLENNDQQFDLILLDPPSFSNSKRMEDILDIQRDHVEMIHNAMRSLSEEGTLIFSNNLRNFKLDLEALGAYNIEDISARTIDEDFKRNPKIHQCWLIRH.

The THUMP domain maps to Leu-44–Leu-155.

Belongs to the methyltransferase superfamily. RlmKL family.

The protein resides in the cytoplasm. It catalyses the reaction guanosine(2445) in 23S rRNA + S-adenosyl-L-methionine = N(2)-methylguanosine(2445) in 23S rRNA + S-adenosyl-L-homocysteine + H(+). The catalysed reaction is guanosine(2069) in 23S rRNA + S-adenosyl-L-methionine = N(2)-methylguanosine(2069) in 23S rRNA + S-adenosyl-L-homocysteine + H(+). Its function is as follows. Specifically methylates the guanine in position 2445 (m2G2445) and the guanine in position 2069 (m7G2069) of 23S rRNA. The chain is Ribosomal RNA large subunit methyltransferase K/L from Cellvibrio japonicus (strain Ueda107) (Pseudomonas fluorescens subsp. cellulosa).